A 466-amino-acid polypeptide reads, in one-letter code: Citrate synthase, mitochondrial (466 aa).

A mitochondrion-targeting transit peptide spans 1–27 (MALLTAAARLLGAKNSSCLVLAARHAS). Residues 2–21 (ALLTAAARLLGAKNSSCLVL) carry the SIFI-degron motif. Lys-57 bears the N6-succinyllysine mark. At Lys-76 the chain carries N6-acetyllysine; alternate. N6-succinyllysine; alternate is present on Lys-76. N6-succinyllysine is present on residues Lys-103 and Lys-193. The residue at position 226 (Ser-226) is a Phosphoserine. His-301 is an active-site residue. An N6-acetyllysine; alternate mark is found at Lys-321 and Lys-327. N6-succinyllysine; alternate is present on residues Lys-321 and Lys-327. His-347 is an active-site residue. Residue Arg-356 coordinates oxaloacetate. At Lys-375 the chain carries N6-acetyllysine; alternate. Lys-375 is modified (N6-succinyllysine; alternate). At Lys-382 the chain carries N6-acetyllysine. Lys-393 carries the post-translational modification N6-acetyllysine; alternate. Lys-393 carries the N6-succinyllysine; alternate modification. An N6,N6,N6-trimethyllysine modification is found at Lys-395. Asp-402 is an active-site residue. Positions 428 and 448 each coordinate oxaloacetate. Residue Lys-450 is modified to N6-succinyllysine. Lys-459 is subject to N6-acetyllysine; alternate. Lys-459 bears the N6-succinyllysine; alternate mark.

It belongs to the citrate synthase family. In terms of assembly, homodimer. Methylated. Trimethylation at Lys-395 by CSKMT decreases citrate synthase activity. In terms of processing, in response to mitochondrial stress, the precursor protein is ubiquitinated by the SIFI complex in the cytoplasm before mitochondrial import, leading to its degradation. Within the SIFI complex, UBR4 initiates ubiquitin chain that are further elongated or branched by KCMF1. In terms of tissue distribution, expressed in the head region and flagellum of epididymal sperm.

Its subcellular location is the mitochondrion matrix. The catalysed reaction is oxaloacetate + acetyl-CoA + H2O = citrate + CoA + H(+). The protein operates within carbohydrate metabolism; tricarboxylic acid cycle; isocitrate from oxaloacetate: step 1/2. Key enzyme of the Krebs tricarboxylic acid cycle which catalyzes the synthesis of citrate from acetyl coenzyme A and oxaloacetate. This is Citrate synthase, mitochondrial (Cs) from Rattus norvegicus (Rat).